The primary structure comprises 152 residues: 3-hydroxyacyl-[acyl-carrier-protein] dehydratase FabZ (152 aa).

Residue His-54 is part of the active site.

Belongs to the thioester dehydratase family. FabZ subfamily.

It localises to the cytoplasm. The catalysed reaction is a (3R)-hydroxyacyl-[ACP] = a (2E)-enoyl-[ACP] + H2O. In terms of biological role, involved in unsaturated fatty acids biosynthesis. Catalyzes the dehydration of short chain beta-hydroxyacyl-ACPs and long chain saturated and unsaturated beta-hydroxyacyl-ACPs. The chain is 3-hydroxyacyl-[acyl-carrier-protein] dehydratase FabZ from Roseobacter denitrificans (strain ATCC 33942 / OCh 114) (Erythrobacter sp. (strain OCh 114)).